The sequence spans 258 residues: Thiazole synthase (258 aa).

Catalysis depends on K100, which acts as the Schiff-base intermediate with DXP. 1-deoxy-D-xylulose 5-phosphate is bound by residues G161, 187–188 (AG), and 209–210 (NT).

It belongs to the ThiG family. As to quaternary structure, homotetramer. Forms heterodimers with either ThiH or ThiS.

Its subcellular location is the cytoplasm. The enzyme catalyses [ThiS sulfur-carrier protein]-C-terminal-Gly-aminoethanethioate + 2-iminoacetate + 1-deoxy-D-xylulose 5-phosphate = [ThiS sulfur-carrier protein]-C-terminal Gly-Gly + 2-[(2R,5Z)-2-carboxy-4-methylthiazol-5(2H)-ylidene]ethyl phosphate + 2 H2O + H(+). It functions in the pathway cofactor biosynthesis; thiamine diphosphate biosynthesis. Its function is as follows. Catalyzes the rearrangement of 1-deoxy-D-xylulose 5-phosphate (DXP) to produce the thiazole phosphate moiety of thiamine. Sulfur is provided by the thiocarboxylate moiety of the carrier protein ThiS. In vitro, sulfur can be provided by H(2)S. The protein is Thiazole synthase of Campylobacter jejuni subsp. jejuni serotype O:2 (strain ATCC 700819 / NCTC 11168).